Consider the following 374-residue polypeptide: Ribosomal RNA large subunit methyltransferase G (374 aa).

The protein belongs to the methyltransferase superfamily. RlmG family.

It localises to the cytoplasm. The enzyme catalyses guanosine(1835) in 23S rRNA + S-adenosyl-L-methionine = N(2)-methylguanosine(1835) in 23S rRNA + S-adenosyl-L-homocysteine + H(+). Specifically methylates the guanine in position 1835 (m2G1835) of 23S rRNA. This is Ribosomal RNA large subunit methyltransferase G from Pseudomonas syringae pv. syringae (strain B728a).